The primary structure comprises 332 residues: Biotin synthase (332 aa).

A Radical SAM core domain is found at 53-283 (WGKGGVHACS…VHPRKTIKFA (231 aa)). The [4Fe-4S] cluster site is built by Cys71, Cys75, and Cys78. Cys150, Cys211, and Lys281 together coordinate [2Fe-2S] cluster.

The protein belongs to the radical SAM superfamily. Biotin synthase family. Homodimer. Requires [4Fe-4S] cluster as cofactor. [2Fe-2S] cluster serves as cofactor.

The enzyme catalyses (4R,5S)-dethiobiotin + (sulfur carrier)-SH + 2 reduced [2Fe-2S]-[ferredoxin] + 2 S-adenosyl-L-methionine = (sulfur carrier)-H + biotin + 2 5'-deoxyadenosine + 2 L-methionine + 2 oxidized [2Fe-2S]-[ferredoxin]. The protein operates within cofactor biosynthesis; biotin biosynthesis; biotin from 7,8-diaminononanoate: step 2/2. Catalyzes the conversion of dethiobiotin (DTB) to biotin by the insertion of a sulfur atom into dethiobiotin via a radical-based mechanism. The sequence is that of Biotin synthase from Chlorobium luteolum (strain DSM 273 / BCRC 81028 / 2530) (Pelodictyon luteolum).